Here is a 568-residue protein sequence, read N- to C-terminus: MGMVGRDIDDLPKNAANYTALTPLWFLERAATVHPTRTSVIHGSRHYTWLQTYHRCRQFASALNNHSIGLGSTVAVIAPNVPALYEAHFAVPMAGAVVNCVNIRLNASTIAFLLGHSSAAAVMVDQEFFSLAEEALKILAQESKSHYKPPLLVVIGDESCDPKTLEYALKTGAIEYEKFLEGGDPEFDWKPPEDEWQSISLGYTSGTTASPKGVVLSHRGAYLMSLSASVVWGINEGAIYLWTLPMFHCNGWCYTWGMAAFCGTNICLRQVTAKGVYSAIAKYGVTHFCAAPVVLNTIVNAPPEEAIIPLPHLVHVMTAGAAPPPSVLFAMSEKGFKVAHTYGLSETYGPSTICAWKPEWDSLPPIKQARLNARQGVRYIALEGLDVVDTKTMKPVPADGTTMGEIVMRGNAVMKGYLKNPKANEESFADGWFHSGDLAVKHPDGYIEIKDRSKDIIISGGENISSLEVENTLYLHPAVLEVSVVARPDERWGESPCAFVTLKPNIDKSNEQVLAEDIIKFCKSKMPAYWVPKSVVFGPLPKTATGKIQKHVLRAKAKEMGALKKSNL.

Residues 204-212 (TSGTTASPK), 340-345 (HTYGLS), aspartate 437, 449-452 (IKDR), and lysine 547 each bind ATP. The tract at residues 272-340 (TAKGVYSAIA…MSEKGFKVAH (69 aa)) is SBD1. The SBD2 stretch occupies residues 341 to 417 (TYGLSETYGP…MRGNAVMKGY (77 aa)).

Belongs to the ATP-dependent AMP-binding enzyme family. As to expression, mostly expressed in glandular trichomes (lupulin glands) after flowering and in old leaves, and, to a lower extent, in stems, young leaves, cones and flowers.

Its subcellular location is the cytoplasm. It localises to the cytosol. It catalyses the reaction acetate + ATP + CoA = acetyl-CoA + AMP + diphosphate. The catalysed reaction is propanoate + ATP + CoA = propanoyl-CoA + AMP + diphosphate. The enzyme catalyses butanoate + ATP + CoA = butanoyl-CoA + AMP + diphosphate. It carries out the reaction 3-methylbutanoate + ATP + CoA = 3-methylbutanoyl-CoA + AMP + diphosphate. It catalyses the reaction pentanoate + ATP + CoA = pentanoyl-CoA + AMP + diphosphate. The catalysed reaction is hexanoate + ATP + CoA = hexanoyl-CoA + AMP + diphosphate. The enzyme catalyses 2-methylpropanoate + ATP + CoA = 2-methylpropanoyl-CoA + AMP + diphosphate. It carries out the reaction 2-methylbutanoate + ATP + CoA = 2-methylbutanoyl-CoA + AMP + diphosphate. It catalyses the reaction 2-methylpentanoate + ATP + CoA = 2-methylpentanoyl-CoA + AMP + diphosphate. The catalysed reaction is 3-methylpentanoate + ATP + CoA = 3-methylpentanoyl-CoA + AMP + diphosphate. The enzyme catalyses 4-methylpentanoate + ATP + CoA = 4-methylpentanoyl-CoA + AMP + diphosphate. The protein operates within secondary metabolite biosynthesis. Its function is as follows. Involved in the biosynthesis of prenylated phenolics natural products which contribute to the bitter taste of beer and display broad biological activities. Catalyzes the ligation of CoA on propanoate to produce propanoyl-CoA. Can also use 2-methylpropanoate (isobutyric acid), acetate, butanoate, isovalerate, pentanoate, hexanoate, 2-methylbutanoate, 2-methylpentanoate, 3-methylpentanoate and 4-methylpentanoate as substrates with a lower efficiency. Triggers the formation of very short chain acyl-CoAs from the corresponding fatty acids, including acetic acid, propanoic acid, butyric acid and its isomer. This is Acetate--CoA ligase CCL3 from Humulus lupulus (European hop).